The primary structure comprises 181 residues: Transmembrane protein 154 (181 aa).

The first 22 residues, M1–G22, serve as a signal peptide directing secretion. The tract at residues S19–S47 is disordered. The Extracellular portion of the chain corresponds to N23 to E74. Residues F75–I95 traverse the membrane as a helical segment. Topologically, residues A96–S181 are cytoplasmic. A disordered region spans residues R103–L122. Residues E107–Q118 show a composition bias toward polar residues. At Y160 the chain carries Phosphotyrosine. The disordered stretch occupies residues E161–S181. A Phosphoserine modification is found at S177.

Its subcellular location is the membrane. This Mus musculus (Mouse) protein is Transmembrane protein 154 (Tmem154).